Consider the following 148-residue polypeptide: Large ribosomal subunit protein eL19 (148 aa).

A compositionally biased stretch (basic residues) spans 52-76; that stretch reads KPKKGISSYRSKKIAQQKKKGRRRG. Residues 52–95 are disordered; sequence KPKKGISSYRSKKIAQQKKKGRRRGPGSIKGAKGARRPKKDEWM.

The protein belongs to the eukaryotic ribosomal protein eL19 family. As to quaternary structure, part of the 50S ribosomal subunit.

Its function is as follows. Binds to the 23S rRNA. This Methanothermobacter thermautotrophicus (strain ATCC 29096 / DSM 1053 / JCM 10044 / NBRC 100330 / Delta H) (Methanobacterium thermoautotrophicum) protein is Large ribosomal subunit protein eL19.